The primary structure comprises 58 residues: MFDLYLKNLLDLSDSGTVVLAKLPEAYAIFDPIVDVLPVIPVFFLLLAFVWQASVSFR.

Positions 1-21 are excised as a propeptide; the sequence is MFDLYLKNLLDLSDSGTVVLA. Residues 29-49 traverse the membrane as a helical segment; the sequence is IFDPIVDVLPVIPVFFLLLAF.

Belongs to the PsbK family. PSII is composed of 1 copy each of membrane proteins PsbA, PsbB, PsbC, PsbD, PsbE, PsbF, PsbH, PsbI, PsbJ, PsbK, PsbL, PsbM, PsbT, PsbX, PsbY, PsbZ, Psb30/Ycf12, at least 3 peripheral proteins of the oxygen-evolving complex and a large number of cofactors. It forms dimeric complexes.

Its subcellular location is the plastid. It is found in the chloroplast thylakoid membrane. Functionally, one of the components of the core complex of photosystem II (PSII). PSII is a light-driven water:plastoquinone oxidoreductase that uses light energy to abstract electrons from H(2)O, generating O(2) and a proton gradient subsequently used for ATP formation. It consists of a core antenna complex that captures photons, and an electron transfer chain that converts photonic excitation into a charge separation. This is Photosystem II reaction center protein K from Zygnema circumcarinatum (Green alga).